The chain runs to 564 residues: NADPH oxidase 1 (564 aa).

At 1–9 (MGNWVVNHW) the chain is on the cytoplasmic side. Residues 10–30 (FSVLFLVVWLGLNVFLFVDAF) traverse the membrane as a helical segment. The Extracellular segment spans residues 31–44 (LKYEKADKYYYTRK). The helical transmembrane segment at 45-72 (ILGSTLACARASALCLNFNSTLILLPVC) threads the bilayer. Positions 54–283 (RASALCLNFN…LAPVILYICE (230 aa)) constitute a Ferric oxidoreductase domain. Over 73 to 102 (RNLLSFLRGTCSFCSRTLRKQLDHNLTFHK) the chain is Cytoplasmic. Heme is bound by residues H101 and H115. The helical transmembrane segment at 103–123 (LVAYMICLHTAIHIIAHLFNF) threads the bilayer. At 124–168 (DCYSRSRQATDGSLASILSSLSHDEKKGGSWLNPIQSRNTTVEYV) the chain is on the extracellular side. The N-linked (GlcNAc...) asparagine glycan is linked to N162. A helical transmembrane segment spans residues 169-189 (TFTSIAGLTGVIMTIALILMV). The Cytoplasmic segment spans residues 190–206 (TSATEFIRRSYFEVFWY). Residues 207–227 (THHLFIFYILGLGIHGIGGIV) traverse the membrane as a helical segment. The heme site is built by H209 and H221. The Extracellular portion of the chain corresponds to 228 to 396 (RGQTEESMNE…TASEDVFQYE (169 aa)). An N-linked (GlcNAc...) asparagine glycan is attached at N236. The FAD-binding FR-type domain maps to 284 to 391 (RILRFYRSQQ…DGPFGTASED (108 aa)). 338–344 (HPFTLTS) serves as a coordination point for FAD. Residues 397–417 (VAVLVGAGIGVTPFASILKSI) traverse the membrane as a helical segment. The interaction with NOXO1 stretch occupies residues 397-536 (VAVLVGAGIG…GVFLCGPRTL (140 aa)). Residues 418-564 (WYKFQCADHN…VQFYFNKENF (147 aa)) are Cytoplasmic-facing. T430 is subject to Phosphothreonine.

NOX1, NOXA1, NOXO1, RAC1 and CYBA forms a functional multimeric complex supporting reactive oxygen species (ROS) production. Interacts with NOXO1. Interacts (via FAD-binding FR-type domain) with ARHGEF7 (via PH domain). The phosphorylated form at Thr-430 interacts with NOXA1 with greater affinity. The cofactor is FAD. Phosphorylation at Thr-430 mediated by PKC/PRKBC positively regulates its interaction with NOXA1 and enzyme activity. As to expression, detected in colon, uterus, prostate, and colon carcinoma, but not in peripheral blood leukocytes.

It is found in the cell projection. The protein localises to the invadopodium membrane. The protein resides in the cell membrane. The enzyme catalyses NADPH + 2 O2 = 2 superoxide + NADP(+) + H(+). With respect to regulation, the oxidase activity is potentiated by NOXA1, NOXO1 and RAC1. Functionally, NADPH oxidase that catalyzes the generation of superoxide from molecular oxygen utilizing NADPH as an electron donor. The protein is NADPH oxidase 1 of Homo sapiens (Human).